Reading from the N-terminus, the 373-residue chain is LIM domain-binding protein 2 (373 aa).

2 disordered regions span residues Ala-244–Ser-291 and Gln-327–Gln-373. Over residues Ser-263 to Gly-280 the composition is skewed to low complexity. Positions Asp-298–Glu-337 constitute an LIM interaction domain (LID) domain. Polar residues predominate over residues Asn-341–Glu-361.

The protein belongs to the LDB family. As to quaternary structure, interacts with LHX9. Interacts with SLK; leading to negatively regulate SLK kinase activity. Interacts with LMO4. Ubiquitinated by RLIM/RNF12, leading to its degradation by the proteasome.

It localises to the nucleus. Transcription cofactor. Binds to the LIM domain of a wide variety of LIM domain-containing transcription factors. The chain is LIM domain-binding protein 2 (LDB2) from Homo sapiens (Human).